Consider the following 389-residue polypeptide: Oxytocin receptor (389 aa).

The disordered stretch occupies residues 1-27 (MEGELAANWSTEAVNSSAAPPGAEGNC). Topologically, residues 1–38 (MEGELAANWSTEAVNSSAAPPGAEGNCTAGPPRRNEAL) are extracellular. N-linked (GlcNAc...) asparagine glycosylation is found at asparagine 8, asparagine 15, and asparagine 26. The span at 8–18 (NWSTEAVNSSA) shows a compositional bias: polar residues. Residues 39–63 (ARVEVAVLCLILFLALSGNACVLLA) traverse the membrane as a helical segment. The Cytoplasmic segment spans residues 64–74 (LRTTRHKHSRL). Residues 75 to 97 (FFFMKHLSIADLVVAVFQVLPQL) form a helical membrane-spanning segment. At 98–113 (LWDITFRFYGPDLLCR) the chain is on the extracellular side. Cysteine 112 and cysteine 187 form a disulfide bridge. Residues 114 to 135 (LVKYLQVVGMFASTYLLLLMSL) traverse the membrane as a helical segment. At 136-154 (DRCLAICQPLRSLRRRTDR) the chain is on the cytoplasmic side. The helical transmembrane segment at 155–175 (LAVLATWLGCLVASAPQVHIF) threads the bilayer. Topologically, residues 176 to 202 (SLREVADGVFDCWAVFIQPWGPKAYIT) are extracellular. Residues 203-225 (WITLAVYIVPVIVLAACYGLISF) traverse the membrane as a helical segment. At 226 to 275 (KIWQNLRLKTAAAAAAEAPEGAAAGDGGRMALARVSSVKLISKAKIRTVK) the chain is on the cytoplasmic side. The helical transmembrane segment at 276–294 (MTFIIVLAFIVCWTPFFFV) threads the bilayer. The Extracellular portion of the chain corresponds to 295–309 (QMWSVWDANAPKEAS). Residues 310–332 (AFIIVMLLASLNSCCNPWIYMLF) traverse the membrane as a helical segment. Topologically, residues 333–389 (TGHLFHELVQRFLCCSASYLKGNRLGETSTSKKSNSSSFVLSHRSSSQRSCSQPSTA) are cytoplasmic. The tract at residues 358–389 (GETSTSKKSNSSSFVLSHRSSSQRSCSQPSTA) is disordered. Over residues 360-389 (TSTSKKSNSSSFVLSHRSSSQRSCSQPSTA) the composition is skewed to low complexity. A phosphoserine mark is found at serine 366 and serine 368.

Belongs to the G-protein coupled receptor 1 family. Vasopressin/oxytocin receptor subfamily.

It is found in the cell membrane. Functionally, receptor for oxytocin. The activity of this receptor is mediated by G proteins which activate a phosphatidylinositol-calcium second messenger system. The polypeptide is Oxytocin receptor (OXTR) (Macaca mulatta (Rhesus macaque)).